The sequence spans 119 residues: Large ribosomal subunit protein bL20 (119 aa).

It belongs to the bacterial ribosomal protein bL20 family.

Its function is as follows. Binds directly to 23S ribosomal RNA and is necessary for the in vitro assembly process of the 50S ribosomal subunit. It is not involved in the protein synthesizing functions of that subunit. This is Large ribosomal subunit protein bL20 from Aromatoleum aromaticum (strain DSM 19018 / LMG 30748 / EbN1) (Azoarcus sp. (strain EbN1)).